Reading from the N-terminus, the 982-residue chain is Glycine dehydrogenase (decarboxylating) (982 aa).

At Lys721 the chain carries N6-(pyridoxal phosphate)lysine.

This sequence belongs to the GcvP family. The glycine cleavage system is composed of four proteins: P, T, L and H. Pyridoxal 5'-phosphate is required as a cofactor.

The enzyme catalyses N(6)-[(R)-lipoyl]-L-lysyl-[glycine-cleavage complex H protein] + glycine + H(+) = N(6)-[(R)-S(8)-aminomethyldihydrolipoyl]-L-lysyl-[glycine-cleavage complex H protein] + CO2. In terms of biological role, the glycine cleavage system catalyzes the degradation of glycine. The P protein binds the alpha-amino group of glycine through its pyridoxal phosphate cofactor; CO(2) is released and the remaining methylamine moiety is then transferred to the lipoamide cofactor of the H protein. This chain is Glycine dehydrogenase (decarboxylating), found in Prochlorococcus marinus (strain MIT 9303).